We begin with the raw amino-acid sequence, 602 residues long: Isocitrate dehydrogenase kinase/phosphatase (602 aa).

Residues Ala-325–Met-331 and Lys-346 contribute to the ATP site. The active site involves Asp-381.

It belongs to the AceK family.

Its subcellular location is the cytoplasm. The enzyme catalyses L-seryl-[isocitrate dehydrogenase] + ATP = O-phospho-L-seryl-[isocitrate dehydrogenase] + ADP + H(+). Functionally, bifunctional enzyme which can phosphorylate or dephosphorylate isocitrate dehydrogenase (IDH) on a specific serine residue. This is a regulatory mechanism which enables bacteria to bypass the Krebs cycle via the glyoxylate shunt in response to the source of carbon. When bacteria are grown on glucose, IDH is fully active and unphosphorylated, but when grown on acetate or ethanol, the activity of IDH declines drastically concomitant with its phosphorylation. The polypeptide is Isocitrate dehydrogenase kinase/phosphatase (Paracidovorax citrulli (strain AAC00-1) (Acidovorax citrulli)).